The chain runs to 205 residues: Methylthioribulose-1-phosphate dehydratase (205 aa).

H96 and H98 together coordinate Zn(2+).

This sequence belongs to the aldolase class II family. MtnB subfamily. Requires Zn(2+) as cofactor.

The enzyme catalyses 5-(methylsulfanyl)-D-ribulose 1-phosphate = 5-methylsulfanyl-2,3-dioxopentyl phosphate + H2O. It participates in amino-acid biosynthesis; L-methionine biosynthesis via salvage pathway; L-methionine from S-methyl-5-thio-alpha-D-ribose 1-phosphate: step 2/6. Its function is as follows. Catalyzes the dehydration of methylthioribulose-1-phosphate (MTRu-1-P) into 2,3-diketo-5-methylthiopentyl-1-phosphate (DK-MTP-1-P). In Pseudomonas aeruginosa (strain LESB58), this protein is Methylthioribulose-1-phosphate dehydratase.